The following is a 255-amino-acid chain: MALAKRIIPCLDVKDGRVVKGVNFIGLRDAGDPVEAAKRYNGEGADELTFLDITASSDNRDTILHIIEEVAGQVFIPLTVGGGVRTVADIRRLLNAGADKVSINTAAVTRPDLIDEAAGFFGSQAIVAAVDAKAVNSENTRWEIFTHGGRNPTGLDAVEWAIEMQKRGAGEILLTGMDRDGTKQGFNLPLTRAVAEAVDIPVIASGGVGNVRHLIEGITEGKADAVLAAGIFHFGEIAIREAKRAMREAGIEVRL.

Active-site residues include aspartate 12 and aspartate 131.

Belongs to the HisA/HisF family. Heterodimer of HisH and HisF.

It localises to the cytoplasm. It carries out the reaction 5-[(5-phospho-1-deoxy-D-ribulos-1-ylimino)methylamino]-1-(5-phospho-beta-D-ribosyl)imidazole-4-carboxamide + L-glutamine = D-erythro-1-(imidazol-4-yl)glycerol 3-phosphate + 5-amino-1-(5-phospho-beta-D-ribosyl)imidazole-4-carboxamide + L-glutamate + H(+). It functions in the pathway amino-acid biosynthesis; L-histidine biosynthesis; L-histidine from 5-phospho-alpha-D-ribose 1-diphosphate: step 5/9. In terms of biological role, IGPS catalyzes the conversion of PRFAR and glutamine to IGP, AICAR and glutamate. The HisF subunit catalyzes the cyclization activity that produces IGP and AICAR from PRFAR using the ammonia provided by the HisH subunit. The polypeptide is Imidazole glycerol phosphate synthase subunit HisF (Neisseria meningitidis serogroup C / serotype 2a (strain ATCC 700532 / DSM 15464 / FAM18)).